A 150-amino-acid chain; its full sequence is Endoribonuclease YbeY (150 aa).

Residues His-102, His-106, and His-112 each coordinate Zn(2+).

Belongs to the endoribonuclease YbeY family. Zn(2+) serves as cofactor.

Its subcellular location is the cytoplasm. Functionally, single strand-specific metallo-endoribonuclease involved in late-stage 70S ribosome quality control and in maturation of the 3' terminus of the 16S rRNA. This chain is Endoribonuclease YbeY, found in Thermotoga petrophila (strain ATCC BAA-488 / DSM 13995 / JCM 10881 / RKU-1).